We begin with the raw amino-acid sequence, 637 residues long: Threonine--tRNA ligase (637 aa).

The 61-residue stretch at 1–61 (MIKITLKDGK…NEDSTLEILT (61 aa)) folds into the TGS domain. Residues 242 to 532 (DHRKLGKELG…LTEHYAGAFP (291 aa)) are catalytic. Cys-333, His-384, and His-509 together coordinate Zn(2+).

This sequence belongs to the class-II aminoacyl-tRNA synthetase family. As to quaternary structure, homodimer. The cofactor is Zn(2+).

It is found in the cytoplasm. It carries out the reaction tRNA(Thr) + L-threonine + ATP = L-threonyl-tRNA(Thr) + AMP + diphosphate + H(+). In terms of biological role, catalyzes the attachment of threonine to tRNA(Thr) in a two-step reaction: L-threonine is first activated by ATP to form Thr-AMP and then transferred to the acceptor end of tRNA(Thr). Also edits incorrectly charged L-seryl-tRNA(Thr). The chain is Threonine--tRNA ligase from Clostridium novyi (strain NT).